Consider the following 193-residue polypeptide: Tetrahydromethanopterin S-methyltransferase subunit A 2 (193 aa).

Topologically, residues 1-38 (MADKKPTAENWPVVSGDYIVGDPESPVAVTTLASHNED) are cytoplasmic. A helical transmembrane segment spans residues 39 to 58 (IPAAAGAAIAGPCKTENLGI). At 59–193 (EKVVANIISN…SESEKIESEA (135 aa)) the chain is on the extracellular side. His-84 contacts 5-hydroxybenzimidazolylcob(I)amide. Residues 174–193 (SKKSSFVESSSESEKIESEA) form a disordered region.

This sequence belongs to the MtrA family. The complex is composed of 8 subunits; MtrA, MtrB, MtrC, MtrD, MtrE, MtrF, MtrG and MtrH. 5-hydroxybenzimidazolylcob(I)amide serves as cofactor.

The protein localises to the cell membrane. The enzyme catalyses 5-methyl-5,6,7,8-tetrahydromethanopterin + coenzyme M + 2 Na(+)(in) = 5,6,7,8-tetrahydromethanopterin + methyl-coenzyme M + 2 Na(+)(out). It functions in the pathway one-carbon metabolism; methanogenesis from CO(2); methyl-coenzyme M from 5,10-methylene-5,6,7,8-tetrahydromethanopterin: step 2/2. In terms of biological role, part of a complex that catalyzes the formation of methyl-coenzyme M and tetrahydromethanopterin from coenzyme M and methyl-tetrahydromethanopterin. This is an energy-conserving, sodium-ion translocating step. This Methanobrevibacter ruminantium (strain ATCC 35063 / DSM 1093 / JCM 13430 / OCM 146 / M1) (Methanobacterium ruminantium) protein is Tetrahydromethanopterin S-methyltransferase subunit A 2.